Here is a 242-residue protein sequence, read N- to C-terminus: MAGHSKWANIKHKKAAADAKRGKIWTRLIKEIQVAARLGGGDANSNPRLRLAVDKAADANMPKDNVKRAIDRGVGGADGANYEEIRYEGYGISGAAIIVDTLTDNRTRTVAEVRHAFSKFGGNMGTDGSVAFMFDHVGQFLFAPGTSEDALMEAALEAGADDVSTNDDGSIEVLCDWQAFSAVKDALEAAGFKAELAEVTMKPQNEVEFTGDDAAKMQKLLDALENLDDVQEVYTNAVIVEE.

Belongs to the TACO1 family.

Its subcellular location is the cytoplasm. This chain is Probable transcriptional regulatory protein BamMC406_2210, found in Burkholderia ambifaria (strain MC40-6).